The sequence spans 292 residues: 4-hydroxy-tetrahydrodipicolinate synthase (292 aa).

Residue T45 coordinates pyruvate. Catalysis depends on Y133, which acts as the Proton donor/acceptor. The active-site Schiff-base intermediate with substrate is the K162. A pyruvate-binding site is contributed by I204.

The protein belongs to the DapA family. As to quaternary structure, homotetramer; dimer of dimers.

The protein resides in the cytoplasm. The catalysed reaction is L-aspartate 4-semialdehyde + pyruvate = (2S,4S)-4-hydroxy-2,3,4,5-tetrahydrodipicolinate + H2O + H(+). It participates in amino-acid biosynthesis; L-lysine biosynthesis via DAP pathway; (S)-tetrahydrodipicolinate from L-aspartate: step 3/4. Functionally, catalyzes the condensation of (S)-aspartate-beta-semialdehyde [(S)-ASA] and pyruvate to 4-hydroxy-tetrahydrodipicolinate (HTPA). This is 4-hydroxy-tetrahydrodipicolinate synthase from Nitratidesulfovibrio vulgaris (strain ATCC 29579 / DSM 644 / CCUG 34227 / NCIMB 8303 / VKM B-1760 / Hildenborough) (Desulfovibrio vulgaris).